Consider the following 416-residue polypeptide: MKIYLVGGAVRDSLLNLPIKDKDYLVVGATPEQMLQLGYRQVGKDFPVFLHPKNQQEYALARTERKIGLGYGGFSCHASPDVTLEQDLLRRDLTINAIAQDEKGNLYDPFNGIEDLNARLLRHVSDAFVEDPLRILRVARFAARFHALGFHIAAETLALMRQISASDELNALTAERVWQEVDKSLGGPHPEVFFEVLHQCGALEVLFPEIFALFGVPQPEKWHPEIDTGVHTLMVLAQAALLTDDKSVRFAALVHDLGKALSPKEHLPKHHGHGQKGLPLIKALCTRLRVPNETRDLALLVSDQHQNVHQAFELRAETIVKIFDKADFWRKPERLTQLILACIADMRGRTGFENNPYPQGEYLTQCFLAANNVDIAAIIAAGFQGAEIKQALNLRRIEAVSQFKQKMQTKLPTDEQ.

ATP is bound by residues Gly-8 and Arg-11. 2 residues coordinate CTP: Gly-8 and Arg-11. Mg(2+) is bound by residues Asp-21 and Asp-23. 3 residues coordinate ATP: Arg-91, Arg-137, and Arg-140. CTP-binding residues include Arg-91, Arg-137, and Arg-140. Positions 228-329 (TGVHTLMVLA…VKIFDKADFW (102 aa)) constitute an HD domain.

Belongs to the tRNA nucleotidyltransferase/poly(A) polymerase family. Bacterial CCA-adding enzyme type 1 subfamily. In terms of assembly, monomer. Can also form homodimers and oligomers. The cofactor is Mg(2+). Ni(2+) serves as cofactor.

The enzyme catalyses a tRNA precursor + 2 CTP + ATP = a tRNA with a 3' CCA end + 3 diphosphate. It carries out the reaction a tRNA with a 3' CCA end + 2 CTP + ATP = a tRNA with a 3' CCACCA end + 3 diphosphate. In terms of biological role, catalyzes the addition and repair of the essential 3'-terminal CCA sequence in tRNAs without using a nucleic acid template. Adds these three nucleotides in the order of C, C, and A to the tRNA nucleotide-73, using CTP and ATP as substrates and producing inorganic pyrophosphate. tRNA 3'-terminal CCA addition is required both for tRNA processing and repair. Also involved in tRNA surveillance by mediating tandem CCA addition to generate a CCACCA at the 3' terminus of unstable tRNAs. While stable tRNAs receive only 3'-terminal CCA, unstable tRNAs are marked with CCACCA and rapidly degraded. This is Multifunctional CCA protein from Shewanella baltica (strain OS223).